The chain runs to 210 residues: Methylthioribulose-1-phosphate dehydratase (210 aa).

H94 and H96 together coordinate Zn(2+).

This sequence belongs to the aldolase class II family. MtnB subfamily. Zn(2+) is required as a cofactor.

It carries out the reaction 5-(methylsulfanyl)-D-ribulose 1-phosphate = 5-methylsulfanyl-2,3-dioxopentyl phosphate + H2O. It participates in amino-acid biosynthesis; L-methionine biosynthesis via salvage pathway; L-methionine from S-methyl-5-thio-alpha-D-ribose 1-phosphate: step 2/6. Functionally, catalyzes the dehydration of methylthioribulose-1-phosphate (MTRu-1-P) into 2,3-diketo-5-methylthiopentyl-1-phosphate (DK-MTP-1-P). This chain is Methylthioribulose-1-phosphate dehydratase, found in Yersinia enterocolitica serotype O:8 / biotype 1B (strain NCTC 13174 / 8081).